A 267-amino-acid polypeptide reads, in one-letter code: MNDTQHTPPFIAVVPARLASTRLPNKPLADIGGKPMVVRVAERAVESGAQQVLIATDAQAVFDVARAHGIDAMMTRADHPSGTDRLAEVAAHYGWRDDMIVVNVQGDEPLIDPALVRGVASHLAATDGCAIATAAHPIHDPADVFNPNVVKVVPDARGVALYFSRAPIPWARDAYQPHWPNIAQMPAPPAPAAVYRHIGLYAYRAKFLRTYPSLSISPIEQAEALEQLRAMWHGERIAVLVTNDAPLPGVDTPDDLARVQAFFGSSA.

The protein belongs to the KdsB family.

The protein resides in the cytoplasm. The catalysed reaction is 3-deoxy-alpha-D-manno-oct-2-ulosonate + CTP = CMP-3-deoxy-beta-D-manno-octulosonate + diphosphate. It functions in the pathway nucleotide-sugar biosynthesis; CMP-3-deoxy-D-manno-octulosonate biosynthesis; CMP-3-deoxy-D-manno-octulosonate from 3-deoxy-D-manno-octulosonate and CTP: step 1/1. The protein operates within bacterial outer membrane biogenesis; lipopolysaccharide biosynthesis. Activates KDO (a required 8-carbon sugar) for incorporation into bacterial lipopolysaccharide in Gram-negative bacteria. The protein is 3-deoxy-manno-octulosonate cytidylyltransferase of Paraburkholderia phymatum (strain DSM 17167 / CIP 108236 / LMG 21445 / STM815) (Burkholderia phymatum).